We begin with the raw amino-acid sequence, 274 residues long: Ciliary microtubule inner protein 2B (274 aa).

2 disordered regions span residues 46-89 (SPGL…SSMV) and 119-171 (TQRN…MDDR). A compositionally biased stretch (basic and acidic residues) spans 130-155 (LPKEAKGEKDVEKDQEPKPEVEKEPE).

Belongs to the CIMIP2 family. Microtubule inner protein component of sperm flagellar doublet microtubules. Expressed in trachea multiciliated cells.

The protein resides in the cytoplasm. It localises to the cytoskeleton. Its subcellular location is the cilium axoneme. The protein localises to the flagellum axoneme. Functionally, microtubule inner protein (MIP) part of the dynein-decorated doublet microtubules (DMTs) in cilia axoneme, which is required for motile cilia beating. This Bos taurus (Bovine) protein is Ciliary microtubule inner protein 2B (CIMIP2B).